The chain runs to 277 residues: Diaminopimelate epimerase (277 aa).

2 residues coordinate substrate: Asn11 and Asn62. The active-site Proton donor is Cys71. Substrate contacts are provided by residues 72-73 (GN), Asn160, Asn193, and 211-212 (ER). Residue Cys220 is the Proton acceptor of the active site. A substrate-binding site is contributed by 221 to 222 (GT).

It belongs to the diaminopimelate epimerase family. Homodimer.

Its subcellular location is the cytoplasm. The enzyme catalyses (2S,6S)-2,6-diaminopimelate = meso-2,6-diaminopimelate. Its pathway is amino-acid biosynthesis; L-lysine biosynthesis via DAP pathway; DL-2,6-diaminopimelate from LL-2,6-diaminopimelate: step 1/1. Functionally, catalyzes the stereoinversion of LL-2,6-diaminopimelate (L,L-DAP) to meso-diaminopimelate (meso-DAP), a precursor of L-lysine. The polypeptide is Diaminopimelate epimerase (Methanococcus maripaludis (strain DSM 14266 / JCM 13030 / NBRC 101832 / S2 / LL)).